A 346-amino-acid polypeptide reads, in one-letter code: Inositol 2-dehydrogenase/D-chiro-inositol 3-dehydrogenase (346 aa).

A compositionally biased stretch (basic and acidic residues) spans 322–331 (GREESIELPK). The disordered stretch occupies residues 322 to 346 (GREESIELPKKPAFYQHSAATPEQV).

The protein belongs to the Gfo/Idh/MocA family. In terms of assembly, homotetramer.

The enzyme catalyses myo-inositol + NAD(+) = scyllo-inosose + NADH + H(+). The catalysed reaction is 1D-chiro-inositol + NAD(+) = scyllo-inosine + NADH + H(+). Its pathway is polyol metabolism; myo-inositol degradation into acetyl-CoA; acetyl-CoA from myo-inositol: step 1/7. Involved in the oxidation of myo-inositol (MI) and D-chiro-inositol (DCI) to 2-keto-myo-inositol (2KMI or 2-inosose) and 1-keto-D-chiro-inositol (1KDCI), respectively. The polypeptide is Inositol 2-dehydrogenase/D-chiro-inositol 3-dehydrogenase (Shouchella clausii (strain KSM-K16) (Alkalihalobacillus clausii)).